Reading from the N-terminus, the 187-residue chain is dCTP deaminase (187 aa).

DCTP contacts are provided by residues 110–115 (KSTYAR), 134–136 (TLE), glutamine 155, tyrosine 169, and glutamine 179. Glutamate 136 acts as the Proton donor/acceptor in catalysis.

Belongs to the dCTP deaminase family. In terms of assembly, homotrimer.

The enzyme catalyses dCTP + H2O + H(+) = dUTP + NH4(+). It functions in the pathway pyrimidine metabolism; dUMP biosynthesis; dUMP from dCTP (dUTP route): step 1/2. Catalyzes the deamination of dCTP to dUTP. The polypeptide is dCTP deaminase (Bordetella pertussis (strain Tohama I / ATCC BAA-589 / NCTC 13251)).